Consider the following 417-residue polypeptide: Gamma-glutamyl phosphate reductase (417 aa).

The protein belongs to the gamma-glutamyl phosphate reductase family.

It is found in the cytoplasm. It carries out the reaction L-glutamate 5-semialdehyde + phosphate + NADP(+) = L-glutamyl 5-phosphate + NADPH + H(+). Its pathway is amino-acid biosynthesis; L-proline biosynthesis; L-glutamate 5-semialdehyde from L-glutamate: step 2/2. Functionally, catalyzes the NADPH-dependent reduction of L-glutamate 5-phosphate into L-glutamate 5-semialdehyde and phosphate. The product spontaneously undergoes cyclization to form 1-pyrroline-5-carboxylate. This chain is Gamma-glutamyl phosphate reductase, found in Escherichia coli O6:H1 (strain CFT073 / ATCC 700928 / UPEC).